The sequence spans 477 residues: Chaperonin GroEL 2 (477 aa).

ATP-binding positions include 29 to 32, 86 to 90, and Gly-416; these read TLGP and DGTTT.

The protein belongs to the chaperonin (HSP60) family. In terms of assembly, forms a cylinder of 14 subunits composed of two heptameric rings stacked back-to-back. Interacts with the co-chaperonin GroES.

The protein localises to the cytoplasm. It catalyses the reaction ATP + H2O + a folded polypeptide = ADP + phosphate + an unfolded polypeptide.. Together with its co-chaperonin GroES, plays an essential role in assisting protein folding. The GroEL-GroES system forms a nano-cage that allows encapsulation of the non-native substrate proteins and provides a physical environment optimized to promote and accelerate protein folding. The sequence is that of Chaperonin GroEL 2 from Streptomyces lividans.